A 124-amino-acid chain; its full sequence is Small ribosomal subunit protein uS12 (124 aa).

A 3-methylthioaspartic acid modification is found at Asp-89. The segment at 104–124 (TDGVENRKQSRSKYGTKRPKK) is disordered. The segment covering 112-124 (QSRSKYGTKRPKK) has biased composition (basic residues).

It belongs to the universal ribosomal protein uS12 family. Part of the 30S ribosomal subunit. Contacts proteins S8 and S17. May interact with IF1 in the 30S initiation complex.

Functionally, with S4 and S5 plays an important role in translational accuracy. In terms of biological role, interacts with and stabilizes bases of the 16S rRNA that are involved in tRNA selection in the A site and with the mRNA backbone. Located at the interface of the 30S and 50S subunits, it traverses the body of the 30S subunit contacting proteins on the other side and probably holding the rRNA structure together. The combined cluster of proteins S8, S12 and S17 appears to hold together the shoulder and platform of the 30S subunit. This is Small ribosomal subunit protein uS12 from Thermosipho melanesiensis (strain DSM 12029 / CIP 104789 / BI429).